The following is a 145-amino-acid chain: Androgenic gland hormone (145 aa).

The N-terminal stretch at 1-21 (MKGLLFIVSLLCLTLHQRVWA) is a signal peptide. 4 disulfide bridges follow: C33–C122, C42–C59, C44–C140, and C123–C131. Positions 68 to 112 (SADDEDYLFEEDEDDEFFHPRALSPPAAKSGDERLEDEVSFHSRS) are cleaved as a propeptide — c peptide. N-linked (GlcNAc...) asparagine glycosylation is present at N132.

As to expression, androgenic gland.

The protein localises to the secreted. In terms of biological role, controls sex differentiation and the formation of male appendages, spermatogenesis, pigmentation, and male specific behavior. The chain is Androgenic gland hormone (AGH) from Porcellio scaber (Common rough woodlouse).